The sequence spans 240 residues: Aspartate/glutamate leucyltransferase (240 aa).

Belongs to the R-transferase family. Bpt subfamily.

The protein localises to the cytoplasm. It carries out the reaction N-terminal L-glutamyl-[protein] + L-leucyl-tRNA(Leu) = N-terminal L-leucyl-L-glutamyl-[protein] + tRNA(Leu) + H(+). The catalysed reaction is N-terminal L-aspartyl-[protein] + L-leucyl-tRNA(Leu) = N-terminal L-leucyl-L-aspartyl-[protein] + tRNA(Leu) + H(+). In terms of biological role, functions in the N-end rule pathway of protein degradation where it conjugates Leu from its aminoacyl-tRNA to the N-termini of proteins containing an N-terminal aspartate or glutamate. The sequence is that of Aspartate/glutamate leucyltransferase from Bordetella avium (strain 197N).